Consider the following 394-residue polypeptide: Actin-related protein 2 (394 aa).

ATP is bound by residues 160-162 (GDG), 214-218 (RMIKE), and 305-310 (GGSTMY).

This sequence belongs to the actin family. ARP2 subfamily. As to quaternary structure, component of the Arp2/3 complex composed of ACTR2/ARP2, ACTR3/ARP3, ARPC1B/p41-ARC, ARPC2/p34-ARC, ARPC3/p21-ARC, ARPC4/p20-ARC and ARPC5/p16-ARC.

Its subcellular location is the cytoplasm. It localises to the cytoskeleton. The protein localises to the cell projection. It is found in the nucleus. Its function is as follows. ATP-binding component of the Arp2/3 complex, a multiprotein complex that mediates actin polymerization upon stimulation by nucleation-promoting factor (NPF). The Arp2/3 complex mediates the formation of branched actin networks in the cytoplasm, providing the force for cell motility. Seems to contact the pointed end of the daughter actin filament. In addition to its role in the cytoplasmic cytoskeleton, the Arp2/3 complex also promotes actin polymerization in the nucleus, thereby regulating gene transcription and repair of damaged DNA. The Arp2/3 complex promotes homologous recombination (HR) repair in response to DNA damage by promoting nuclear actin polymerization, leading to drive motility of double-strand breaks (DSBs). This Gallus gallus (Chicken) protein is Actin-related protein 2 (ACTR2).